The following is a 505-amino-acid chain: Protein disulfide-isomerase A3 (505 aa).

Positions 1–24 (MSVPRPSRAALLLLVPLLALSAGA) are cleaved as a signal peptide. Thioredoxin domains are found at residues 25 to 131 (SDVV…KQAG) and 341 to 483 (SRDG…REAT). Residues cysteine 55 and cysteine 58 each act as nucleophile in the active site. 3 disulfide bridges follow: cysteine 55–cysteine 58, cysteine 83–cysteine 90, and cysteine 404–cysteine 407. Residues cysteine 404 and cysteine 407 each act as nucleophile in the active site. The tract at residues 486–505 (PVLQEEDKAKKSKKKAKEDL) is disordered. A compositionally biased stretch (basic residues) spans 495-505 (KKSKKKAKEDL). The short motif at 502-505 (KEDL) is the Prevents secretion from ER element.

This sequence belongs to the protein disulfide isomerase family.

The protein localises to the endoplasmic reticulum. It is found in the endoplasmic reticulum lumen. Its subcellular location is the melanosome. The enzyme catalyses Catalyzes the rearrangement of -S-S- bonds in proteins.. Its function is as follows. Protein disulfide isomerase that catalyzes the formation, isomerization, and reduction or oxidation of disulfide bonds in client proteins and functions as a protein folding chaperone. The polypeptide is Protein disulfide-isomerase A3 (PDIA3) (Gallus gallus (Chicken)).